The sequence spans 530 residues: UDP-glucuronosyltransferase 1A10 (530 aa).

An N-terminal signal peptide occupies residues 1–25 (MARAGWTSPVPLCVCLLLTCGFAEA). Residues asparagine 71, asparagine 292, and asparagine 344 are each glycosylated (N-linked (GlcNAc...) asparagine). Residues 488–504 (VIGFLLAVVLTVAFITF) traverse the membrane as a helical segment.

This sequence belongs to the UDP-glycosyltransferase family. As to quaternary structure, homodimer. Homooligomer. Interacts with UGT1A1, UGT1A3, UGT1A4, UGT1A6, UGT1A7, UGT1A8 and UGT1A9 to form heterodimers. Isoform 1 interacts with isoform 2/i2 suggesting that oligomerization is involved in negative regulation of transferase activity by isoform 2. Isoform 1 also interacts with respective i2 isoforms of UGT1A1, UGT1A3, UGT1A4, UGT1A6, UGT1A7, UGT1A8 and UGT1A9. Liver and colon. Isoform 1 and isoform 2 are expressed in colon, esophagus and small intestine; isoform 2 but not isoform 1 is expressed in liver or kidney.

It localises to the endoplasmic reticulum membrane. It catalyses the reaction glucuronate acceptor + UDP-alpha-D-glucuronate = acceptor beta-D-glucuronoside + UDP + H(+). The catalysed reaction is 17beta-estradiol + UDP-alpha-D-glucuronate = 17beta-estradiol 3-O-(beta-D-glucuronate) + UDP + H(+). The enzyme catalyses 17beta-estradiol + UDP-alpha-D-glucuronate = 17beta-estradiol 17-O-(beta-D-glucuronate) + UDP + H(+). It carries out the reaction 17alpha-estradiol + UDP-alpha-D-glucuronate = 17alpha-estradiol 3-O-(beta-D-glucuronate) + UDP + H(+). It catalyses the reaction 16alpha,17beta-estriol + UDP-alpha-D-glucuronate = 16alpha,17beta-estriol 3-O-(beta-D-glucuronate) + UDP + H(+). The catalysed reaction is 16beta,17beta-estriol + UDP-alpha-D-glucuronate = 16beta,17beta-estriol 3-O-(beta-D-glucuronate) + UDP + H(+). The enzyme catalyses 16alpha,17alpha-estriol + UDP-alpha-D-glucuronate = 16alpha,17alpha-estriol 3-O-(beta-D-glucuronate) + UDP + H(+). It carries out the reaction 16alpha-hydroxyestrone + UDP-alpha-D-glucuronate = 16alpha-hydroxyestrone 3-O-(beta-D-glucuronate) + UDP + H(+). It catalyses the reaction estrone + UDP-alpha-D-glucuronate = estrone 3-O-(beta-D-glucuronate) + UDP + H(+). The catalysed reaction is prunetin + UDP-alpha-D-glucuronate = prunetin-4'-O-beta-D-glucuronide + UDP. The enzyme catalyses (5Z,8Z,11Z,14Z)-eicosatetraenoate + UDP-alpha-D-glucuronate = O-[(5Z),(8Z),(11Z),(14Z)-eicosatetraenoyl]-beta-D-glucuronate + UDP. It carries out the reaction 15-hydroxy-(5Z,8Z,11Z,13E)-eicosatetraenoate + UDP-alpha-D-glucuronate = 15-O-(beta-D-glucuronosyl)-(5Z,8Z,11Z,14Z)-eicosatetraenoate + UDP + H(+). It catalyses the reaction prostaglandin B1 + UDP-alpha-D-glucuronate = 15-O-(beta-D-glucuronosyl)-prostaglandin B1 + UDP + H(+). The catalysed reaction is (E)-ferulate + UDP-alpha-D-glucuronate = (E)-4-O-(beta-D-glucuronosyl)-ferulate + UDP + H(+). The enzyme catalyses (E)-ferulate + UDP-alpha-D-glucuronate = (E)-ferulic acid beta-D-glucuronate ester + UDP. It carries out the reaction losartan + UDP-alpha-D-glucuronate = losartan-2-N-beta-D-glucuronide + UDP. It catalyses the reaction candesartan + UDP-alpha-D-glucuronate = candesartan O-beta-D-glucuronoside + UDP. The catalysed reaction is candesartan + UDP-alpha-D-glucuronate = candesartan-2-N-beta-D-glucuronide + UDP. The enzyme catalyses zolasartan + UDP-alpha-D-glucuronate = zolarsartan-1-N-beta-D-glucuronide + UDP. Its function is as follows. UDP-glucuronosyltransferase (UGT) that catalyzes phase II biotransformation reactions in which lipophilic substrates are conjugated with glucuronic acid to increase the metabolite's water solubility, thereby facilitating excretion into either the urine or bile. Essential for the elimination and detoxification of drugs, xenobiotics and endogenous compounds. Catalyzes the glucuronidation of endogenous estrogen hormones such as estradiol, estrone and estriol. Involved in the glucuronidation of arachidonic acid (AA) and AA-derived eicosanoids including 15-HETE and PGB1. Involved in the glucuronidation of the phytochemical ferulic acid at the phenolic or the carboxylic acid group. Also catalyzes the glucuronidation of the isoflavones genistein, daidzein, glycitein, formononetin, biochanin A and prunetin, which are phytoestrogens with anticancer and cardiovascular properties. Involved in the glucuronidation of the AGTR1 angiotensin receptor antagonist losartan, caderastan and zolarsatan, drugs which can inhibit the effect of angiotensin II. Lacks UGT glucuronidation activity but acts as a negative regulator of isoform 1. In Homo sapiens (Human), this protein is UDP-glucuronosyltransferase 1A10.